A 73-amino-acid polypeptide reads, in one-letter code: Large ribosomal subunit protein bL31 (73 aa).

Residues Cys16, Cys18, Cys36, and Cys39 each contribute to the Zn(2+) site.

The protein belongs to the bacterial ribosomal protein bL31 family. Type A subfamily. Part of the 50S ribosomal subunit. Zn(2+) serves as cofactor.

In terms of biological role, binds the 23S rRNA. The protein is Large ribosomal subunit protein bL31 of Myxococcus xanthus (strain DK1622).